The chain runs to 475 residues: Dihydrolipoyl dehydrogenase (475 aa).

Residues 39–47 (EKDAYGGTC), lysine 56, and alanine 118 contribute to the FAD site. A disulfide bond links cysteine 47 and cysteine 52. NAD(+) is bound by residues 186-190 (GGGYI), glutamate 209, and 275-278 (AVGR). FAD contacts are provided by aspartate 318 and alanine 327. Histidine 451 functions as the Proton acceptor in the catalytic mechanism.

The protein belongs to the class-I pyridine nucleotide-disulfide oxidoreductase family. As to quaternary structure, homodimer. It depends on FAD as a cofactor.

It localises to the cytoplasm. It catalyses the reaction N(6)-[(R)-dihydrolipoyl]-L-lysyl-[protein] + NAD(+) = N(6)-[(R)-lipoyl]-L-lysyl-[protein] + NADH + H(+). The sequence is that of Dihydrolipoyl dehydrogenase (lpdA) from Haloferax volcanii (strain ATCC 29605 / DSM 3757 / JCM 8879 / NBRC 14742 / NCIMB 2012 / VKM B-1768 / DS2) (Halobacterium volcanii).